Here is a 626-residue protein sequence, read N- to C-terminus: DNA-directed RNA polymerase subunit gamma (626 aa).

Zn(2+)-binding residues include C71, C73, C86, and C89. 3 residues coordinate Mg(2+): D467, D469, and D471.

Belongs to the RNA polymerase beta' chain family. RpoC1 subfamily. In terms of assembly, in cyanobacteria the RNAP catalytic core is composed of 2 alpha, 1 beta, 1 beta', 1 gamma and 1 omega subunit. When a sigma factor is associated with the core the holoenzyme is formed, which can initiate transcription. Requires Mg(2+) as cofactor. It depends on Zn(2+) as a cofactor.

The catalysed reaction is RNA(n) + a ribonucleoside 5'-triphosphate = RNA(n+1) + diphosphate. In terms of biological role, DNA-dependent RNA polymerase catalyzes the transcription of DNA into RNA using the four ribonucleoside triphosphates as substrates. This is DNA-directed RNA polymerase subunit gamma from Microcystis aeruginosa (strain NIES-843 / IAM M-2473).